Here is a 720-residue protein sequence, read N- to C-terminus: Receptor-like protein CLAVATA2 (720 aa).

Residues 1-25 form the signal peptide; that stretch reads MIKIADFTLFFFIFVFSPSLPLAQS. The tract at residues 26-92 is N-cap; the sequence is QLPDLDPQDK…LNLSSQIHPS (67 aa). The Extracellular portion of the chain corresponds to 26–686; the sequence is QLPDLDPQDK…QNELVEGPIS (661 aa). Asn49, Asn62, Asn84, Asn108, Asn127, and Asn168 each carry an N-linked (GlcNAc...) asparagine glycan. The cysteines at positions 60 and 68 are disulfide-linked. LRR repeat units follow at residues 96 to 122, 124 to 144, 146 to 168, 170 to 194, 195 to 217, 219 to 238, 239 to 263, 264 to 287, 288 to 311, 314 to 338, 339 to 362, 364 to 386, 388 to 410, 411 to 436, 438 to 458, 459 to 482, 484 to 506, 547 to 571, 573 to 594, 595 to 617, and 619 to 641; these read LSSL…SLRN, RTLN…FVSL, ELRE…WFGN, SMNL…LLYL, KSLK…FQQP, VVLN…FYAS, RPSL…LGSL, KELS…LMFS, EKLV…ISET, KLGL…ITEL, KSLQ…IGNL, YLQV…IVGC, QLLA…LDAL, DSLK…GLKS, EIVD…ITKW, SNLK…LFKF, KIQM…NLNS, LLSM…LFRQ, NIEY…LEKL, PRLK…NISA, and PGLT…KEGL. N-linked (GlcNAc...) asparagine glycosylation occurs at Asn206. Asn270 carries an N-linked (GlcNAc...) asparagine glycan. The N-linked (GlcNAc...) asparagine glycan is linked to Asn361. Asn398 is a glycosylation site (N-linked (GlcNAc...) asparagine). The N-linked (GlcNAc...) asparagine glycan is linked to Asn446. A glycan (N-linked (GlcNAc...) asparagine) is linked at Asn505. N-linked (GlcNAc...) asparagine glycosylation is found at Asn578, Asn614, and Asn625. A C-cap/acidic domain region spans residues 649 to 682; sequence AGNPELCVETPGSKCDPANIDASQEEIYQNELVE. Residues 687–707 form a helical membrane-spanning segment; it reads IWIFCLSAFISFDFGVLGIFC. Residues 708 to 720 are Cytoplasmic-facing; it reads SARARSYILQTKA.

It belongs to the RLP family. Parts of a tetrameric complex made of two CLV2/CRN heterodimers that can interact with CLV3 and CLE peptides. CLV2/CRN heterodimer interacts with CLV1 homodimers. Interacts with CRN; this dimer can interact with BAM3. Interacts with CLE14. Mostly expressed in apices (e.g. shoot apical meristem and flower buds), and, to a lower extent, in flowers, leaves, seedlings and siliques. Also expressed in the inner tissues of the proximal root meristem. Expressed throughout the vascular cylinder of root tips.

The protein resides in the cell membrane. Its subcellular location is the endoplasmic reticulum membrane. Its function is as follows. Involved in the perception of CLV3 and CLV3-like (CLE) peptides, that act as extracellular signals regulating meristems maintenance. Required for the sensing of the root CLE peptides (e.g. CLE8, CLE9/CLE10, CLE11, CLE13, CLE14, CLE16, CLE17, CLE18, CLE20, CLE21, CLE25, CLE26, CLE40, CLE41/CLE44 and CLE45), which also involves CRN and leads to root growth regulation, mostly in the phloem and protophloem. Involved in controlling the stem cell population size in shoot and root apical meristems, and during organ development. Promotes the formation of CLV1 multimers. In complex with CRN, perceives secreted CLV3-like effector proteins from plant-parasitic cyst nematodes as ligand mimics of the plant CLE signaling pathway. This recognition is required for proper feeding structure (syncytium) development and ultimately successful nematode infection. CLE14 perception by CLV2/CRN complex triggers root meristem differentiation. In Arabidopsis thaliana (Mouse-ear cress), this protein is Receptor-like protein CLAVATA2.